The sequence spans 338 residues: MVDDERVVSPETADDHEDSVEKSLRPQVLAQYIGQEPIKHELSVYIQAAKQREESLDHVLLYGPPGLGKTTLAMVIANEMGVQIRTTSGPAIEKPGDLVALLNELQPGDILFIDEIHRLPKIVEEMLYSAMEDFYIDIVVGQGPTAHPVHFPLPPFTLIGATTRAGLLSAPLRDRFGIVEHMAYYETTDLQEIVLRSADIFHTAIATEGAHEIALRSRGTPRIANRLLKRIRDFAEVAPDHDQIDLAIVDHALDLLRVDSAGLDATDIKLLETMIDYYNGGPVGLNTLAANIGEETETVAAMYEPYLLQRGYLKRTARGRVVTATGYQHLGRTMPDNN.

The disordered stretch occupies residues 1–22; the sequence is MVDDERVVSPETADDHEDSVEK. Residues 4-185 are large ATPase domain (RuvB-L); that stretch reads DERVVSPETA…FGIVEHMAYY (182 aa). ATP-binding positions include Leu24, Arg25, Gly66, Lys69, Thr70, Thr71, 132 to 134, Arg175, Tyr185, and Arg222; that span reads EDF. Thr70 contributes to the Mg(2+) binding site. Positions 186 to 257 are small ATPAse domain (RuvB-S); sequence ETTDLQEIVL…IVDHALDLLR (72 aa). The segment at 260-338 is head domain (RuvB-H); the sequence is SAGLDATDIK…HLGRTMPDNN (79 aa). The DNA site is built by Arg315 and Arg320.

It belongs to the RuvB family. As to quaternary structure, homohexamer. Forms an RuvA(8)-RuvB(12)-Holliday junction (HJ) complex. HJ DNA is sandwiched between 2 RuvA tetramers; dsDNA enters through RuvA and exits via RuvB. An RuvB hexamer assembles on each DNA strand where it exits the tetramer. Each RuvB hexamer is contacted by two RuvA subunits (via domain III) on 2 adjacent RuvB subunits; this complex drives branch migration. In the full resolvosome a probable DNA-RuvA(4)-RuvB(12)-RuvC(2) complex forms which resolves the HJ.

Its subcellular location is the cytoplasm. It carries out the reaction ATP + H2O = ADP + phosphate + H(+). Its function is as follows. The RuvA-RuvB-RuvC complex processes Holliday junction (HJ) DNA during genetic recombination and DNA repair, while the RuvA-RuvB complex plays an important role in the rescue of blocked DNA replication forks via replication fork reversal (RFR). RuvA specifically binds to HJ cruciform DNA, conferring on it an open structure. The RuvB hexamer acts as an ATP-dependent pump, pulling dsDNA into and through the RuvAB complex. RuvB forms 2 homohexamers on either side of HJ DNA bound by 1 or 2 RuvA tetramers; 4 subunits per hexamer contact DNA at a time. Coordinated motions by a converter formed by DNA-disengaged RuvB subunits stimulates ATP hydrolysis and nucleotide exchange. Immobilization of the converter enables RuvB to convert the ATP-contained energy into a lever motion, pulling 2 nucleotides of DNA out of the RuvA tetramer per ATP hydrolyzed, thus driving DNA branch migration. The RuvB motors rotate together with the DNA substrate, which together with the progressing nucleotide cycle form the mechanistic basis for DNA recombination by continuous HJ branch migration. Branch migration allows RuvC to scan DNA until it finds its consensus sequence, where it cleaves and resolves cruciform DNA. This is Holliday junction branch migration complex subunit RuvB from Levilactobacillus brevis (strain ATCC 367 / BCRC 12310 / CIP 105137 / JCM 1170 / LMG 11437 / NCIMB 947 / NCTC 947) (Lactobacillus brevis).